A 396-amino-acid polypeptide reads, in one-letter code: LIM/homeobox protein Lhx9 (396 aa).

2 LIM zinc-binding domains span residues 69-130 and 131-193; these read ALCA…RFSV and QRCA…LIQG. Disordered regions lie at residues 248 to 272, 328 to 365, and 377 to 396; these read ENDADHLDRDQQPYPPSQKTKRMRT, RQENGGVDKADGTSLPPPSSDSGALTPPSTATTLTDLT, and SSLDSHESGSPPQTTLTNLF. Residues 267 to 326 constitute a DNA-binding region (homeobox); it reads TKRMRTSFKHHQLRTMKSYFAINHNPDAKDLKQLAQKTGLTKRVLQVWFQNARAKFRRNV. Residues 352 to 365 show a composition bias toward low complexity; it reads LTPPSTATTLTDLT. Over residues 384–396 the composition is skewed to polar residues; it reads SGSPPQTTLTNLF.

Its subcellular location is the nucleus. Its function is as follows. May be involved in gonadal development. The sequence is that of LIM/homeobox protein Lhx9 (lhx9) from Danio rerio (Zebrafish).